We begin with the raw amino-acid sequence, 462 residues long: uncharacterized protein (462 aa).

The region spanning 12–70 is the TRAM domain; it reads MLKKNDIIQVAISDLSHEGAGVAKHDGFVFFVDNALPEEVIDMRVLKVNKNSGFGKVEA. The S-adenosyl-L-methionine site is built by glutamine 294, tyrosine 323, glutamate 344, and aspartate 392. Cysteine 419 serves as the catalytic Nucleophile.

This sequence belongs to the class I-like SAM-binding methyltransferase superfamily. RNA M5U methyltransferase family.

This is an uncharacterized protein from Streptococcus pyogenes serotype M18 (strain MGAS8232).